Reading from the N-terminus, the 377-residue chain is MRAIGVFEYITLRAVLACATALLIGLVAGPRVIRRLTEMKIGQAVRAYGPESHLVKTGTPTMGGALILIAIAISTLLWADWTNRFVWVVLLVTFGFGWIGWMDDYRKVVYRDPEGMPARQKFFWQATIGLVAAVYLAFAVSAPANTELWPLFKAWVGSGFTMPLPTRADLIVPFFKSVSYPLGVLGFVALTWAVIVGTSNAVNLTDGLDGLAIMPTVMVGSALGIFAYVVGRVDYSKYLLFPYIPGAAELMVLCAAIGGAGLAFLWFNAYPAQVFMGDVGALALGGALGTIAVIVRQEIVLFIMGGVFVVETLSVMVQVTWFKYTKRKYGQGRRIFRMAPLHHHFEVGGWKETQVVVRFWIITMMLVLVGLSTLKLR.

11 consecutive transmembrane segments (helical) span residues 9 to 29, 59 to 79, 85 to 105, 122 to 142, 155 to 175, 178 to 198, 210 to 230, 247 to 267, 274 to 294, 299 to 319, and 354 to 374; these read YITL…LVAG, TPTM…LLWA, FVWV…MDDY, FFWQ…AVSA, WVGS…VPFF, VSYP…IVGT, GLAI…AYVV, AAEL…FLWF, VFMG…IAVI, IVLF…MVQV, and QVVV…LSTL.

Belongs to the glycosyltransferase 4 family. MraY subfamily. The cofactor is Mg(2+).

It is found in the cell inner membrane. The catalysed reaction is UDP-N-acetyl-alpha-D-muramoyl-L-alanyl-gamma-D-glutamyl-meso-2,6-diaminopimeloyl-D-alanyl-D-alanine + di-trans,octa-cis-undecaprenyl phosphate = di-trans,octa-cis-undecaprenyl diphospho-N-acetyl-alpha-D-muramoyl-L-alanyl-D-glutamyl-meso-2,6-diaminopimeloyl-D-alanyl-D-alanine + UMP. It participates in cell wall biogenesis; peptidoglycan biosynthesis. Its function is as follows. Catalyzes the initial step of the lipid cycle reactions in the biosynthesis of the cell wall peptidoglycan: transfers peptidoglycan precursor phospho-MurNAc-pentapeptide from UDP-MurNAc-pentapeptide onto the lipid carrier undecaprenyl phosphate, yielding undecaprenyl-pyrophosphoryl-MurNAc-pentapeptide, known as lipid I. This chain is Phospho-N-acetylmuramoyl-pentapeptide-transferase, found in Bordetella bronchiseptica (strain ATCC BAA-588 / NCTC 13252 / RB50) (Alcaligenes bronchisepticus).